The chain runs to 323 residues: Annexin A5 (323 aa).

Annexin repeat units lie at residues 17 to 88 (FNDK…ALMV), 89 to 160 (PAHL…SLVQ), 172 to 244 (GQVE…AVVK), and 248 to 319 (SIQG…LLCG).

It belongs to the annexin family.

Functionally, calcium/phospholipid-binding protein which promotes membrane fusion and is involved in exocytosis. The polypeptide is Annexin A5 (Cynops pyrrhogaster (Japanese fire-bellied newt)).